We begin with the raw amino-acid sequence, 485 residues long: Glutamyl-tRNA(Gln) amidotransferase subunit A (485 aa).

Catalysis depends on charge relay system residues K79 and S154. S178 functions as the Acyl-ester intermediate in the catalytic mechanism.

It belongs to the amidase family. GatA subfamily. In terms of assembly, heterotrimer of A, B and C subunits.

The enzyme catalyses L-glutamyl-tRNA(Gln) + L-glutamine + ATP + H2O = L-glutaminyl-tRNA(Gln) + L-glutamate + ADP + phosphate + H(+). Allows the formation of correctly charged Gln-tRNA(Gln) through the transamidation of misacylated Glu-tRNA(Gln) in organisms which lack glutaminyl-tRNA synthetase. The reaction takes place in the presence of glutamine and ATP through an activated gamma-phospho-Glu-tRNA(Gln). This chain is Glutamyl-tRNA(Gln) amidotransferase subunit A, found in Staphylococcus saprophyticus subsp. saprophyticus (strain ATCC 15305 / DSM 20229 / NCIMB 8711 / NCTC 7292 / S-41).